Reading from the N-terminus, the 665-residue chain is DNA ligase (665 aa).

Residues 35–39, 88–89, and glutamate 117 contribute to the NAD(+) site; these read DAIYD and SL. Lysine 119 acts as the N6-AMP-lysine intermediate in catalysis. 4 residues coordinate NAD(+): arginine 140, glutamate 174, lysine 290, and lysine 314. Residues cysteine 406, cysteine 409, cysteine 424, and cysteine 429 each coordinate Zn(2+). The region spanning 588–665 is the BRCT domain; the sequence is KKTERFAQLS…EEAFNELLVS (78 aa).

This sequence belongs to the NAD-dependent DNA ligase family. LigA subfamily. Mg(2+) serves as cofactor. The cofactor is Mn(2+).

The enzyme catalyses NAD(+) + (deoxyribonucleotide)n-3'-hydroxyl + 5'-phospho-(deoxyribonucleotide)m = (deoxyribonucleotide)n+m + AMP + beta-nicotinamide D-nucleotide.. Functionally, DNA ligase that catalyzes the formation of phosphodiester linkages between 5'-phosphoryl and 3'-hydroxyl groups in double-stranded DNA using NAD as a coenzyme and as the energy source for the reaction. It is essential for DNA replication and repair of damaged DNA. The sequence is that of DNA ligase from Metamycoplasma arthritidis (strain 158L3-1) (Mycoplasma arthritidis).